A 424-amino-acid polypeptide reads, in one-letter code: Serine--tRNA ligase (424 aa).

230–232 (TAE) contacts L-serine. ATP is bound at residue 261–263 (RSE). L-serine is bound at residue Glu-284. An ATP-binding site is contributed by 348–351 (EISS). Position 384 (Ser-384) interacts with L-serine.

It belongs to the class-II aminoacyl-tRNA synthetase family. Type-1 seryl-tRNA synthetase subfamily. In terms of assembly, homodimer. The tRNA molecule binds across the dimer.

The protein resides in the cytoplasm. The enzyme catalyses tRNA(Ser) + L-serine + ATP = L-seryl-tRNA(Ser) + AMP + diphosphate + H(+). The catalysed reaction is tRNA(Sec) + L-serine + ATP = L-seryl-tRNA(Sec) + AMP + diphosphate + H(+). It participates in aminoacyl-tRNA biosynthesis; selenocysteinyl-tRNA(Sec) biosynthesis; L-seryl-tRNA(Sec) from L-serine and tRNA(Sec): step 1/1. Catalyzes the attachment of serine to tRNA(Ser). Is also able to aminoacylate tRNA(Sec) with serine, to form the misacylated tRNA L-seryl-tRNA(Sec), which will be further converted into selenocysteinyl-tRNA(Sec). In Desulfatibacillum aliphaticivorans, this protein is Serine--tRNA ligase.